Consider the following 135-residue polypeptide: C-type lectin LmsL (135 aa).

Disulfide bonds link C3–C14, C31–C131, C38–C133, and C106–C123. The 123-residue stretch at 10 to 132 (MNGLCYKIFD…CESKNAFLCQ (123 aa)) folds into the C-type lectin domain. Positions 96, 98, 104, 119, and 120 each coordinate Ca(2+). The short motif at 96 to 98 (QPD) is the Galactose-binding element.

Belongs to the true venom lectin family. As to quaternary structure, homodimer; disulfide-linked. As to expression, expressed by the venom gland.

It is found in the secreted. Galactose-binding protein which recognizes specific carbohydrate structures and agglutinates a variety of animal cells by binding to cell-surface glycoproteins and glycolipids. Is a calcium-dependent lectin. Shows high hemagglutinating activity, that is inhibited by lactose, galactose and inositol. This Lachesis stenophrys (Central American bushmaster) protein is C-type lectin LmsL.